Reading from the N-terminus, the 297-residue chain is Thiosulfate sulfurtransferase (297 aa).

The residue at position 14 (K14) is an N6-acetyllysine; alternate. An N6-succinyllysine; alternate modification is found at K14. Residues 25–143 form the Rhodanese 1 domain; sequence VGPGLRVLDA…WLKEGHPVTS (119 aa). S35 carries an O-linked (GlcNAc) serine glycan. S38 carries the phosphoserine modification. K136 carries the post-translational modification N6-acetyllysine; alternate. N6-succinyllysine; alternate is present on K136. The tract at residues 144-159 is hinge; it reads EPSRPEPAIFKATLNR. K163 carries the N6-acetyllysine modification. The Rhodanese 2 domain maps to 173–288; the sequence is ESKRFQLVDS…WFHRAPPETW (116 aa). K175 carries the post-translational modification N6-acetyllysine; alternate. K175 carries the post-translational modification N6-succinyllysine; alternate. R187 is a substrate binding site. K224 is modified (N6-acetyllysine; alternate). K224 carries the post-translational modification N6-succinyllysine; alternate. Residue K236 is modified to N6-acetyllysine. Residue K237 is modified to N6-acetyllysine; alternate. K237 bears the N6-succinyllysine; alternate mark. C248 (cysteine persulfide intermediate) is an active-site residue. K250 provides a ligand contact to substrate.

As to quaternary structure, monomer. As to expression, expressed in numerous tissues.

The protein localises to the mitochondrion matrix. It catalyses the reaction thiosulfate + hydrogen cyanide = thiocyanate + sulfite + 2 H(+). In terms of biological role, together with MRPL18, acts as a mitochondrial import factor for the cytosolic 5S rRNA. Only the nascent unfolded cytoplasmic form is able to bind to the 5S rRNA. Formation of iron-sulfur complexes and cyanide detoxification. Binds molecular oxygen and sulfur. The sequence is that of Thiosulfate sulfurtransferase (TST) from Bos taurus (Bovine).